The following is a 682-amino-acid chain: Potassium-transporting ATPase ATP-binding subunit (682 aa).

Helical transmembrane passes span 34 to 54, 62 to 82, 219 to 239, and 254 to 274; these read PVMF…IAMA, ALFS…ANFA, IALT…TATL, and VLVA…LSAI. Asp307 (4-aspartylphosphate intermediate) is an active-site residue. Residues Asp344, Glu348, 377–384, and Lys395 each bind ATP; that span reads FTAQSRMS. Mg(2+) contacts are provided by Asp518 and Asp522. Helical transmembrane passes span 588 to 608, 616 to 636, and 656 to 676; these read FAII…LNIM, AILS…PLAL, and IYGL…DLLL.

It belongs to the cation transport ATPase (P-type) (TC 3.A.3) family. Type IA subfamily. As to quaternary structure, the system is composed of three essential subunits: KdpA, KdpB and KdpC.

It localises to the cell inner membrane. The catalysed reaction is K(+)(out) + ATP + H2O = K(+)(in) + ADP + phosphate + H(+). Part of the high-affinity ATP-driven potassium transport (or Kdp) system, which catalyzes the hydrolysis of ATP coupled with the electrogenic transport of potassium into the cytoplasm. This subunit is responsible for energy coupling to the transport system and for the release of the potassium ions to the cytoplasm. This is Potassium-transporting ATPase ATP-binding subunit from Escherichia coli O139:H28 (strain E24377A / ETEC).